The sequence spans 215 residues: Cytochrome c biogenesis ATP-binding export protein CcmA (215 aa).

Positions 8–215 constitute an ABC transporter domain; sequence LQATALACER…RDLDLGQWSA (208 aa). ATP is bound at residue 40 to 47; that stretch reads GPNGCGKT.

The protein belongs to the ABC transporter superfamily. CcmA exporter (TC 3.A.1.107) family. As to quaternary structure, the complex is composed of two ATP-binding proteins (CcmA) and two transmembrane proteins (CcmB).

It is found in the cell inner membrane. It catalyses the reaction heme b(in) + ATP + H2O = heme b(out) + ADP + phosphate + H(+). Functionally, part of the ABC transporter complex CcmAB involved in the biogenesis of c-type cytochromes; once thought to export heme, this seems not to be the case, but its exact role is uncertain. Responsible for energy coupling to the transport system. In Pseudomonas syringae pv. syringae (strain B728a), this protein is Cytochrome c biogenesis ATP-binding export protein CcmA.